A 211-amino-acid chain; its full sequence is Transcription antitermination protein NusB (211 aa).

The protein belongs to the NusB family.

Involved in transcription antitermination. Required for transcription of ribosomal RNA (rRNA) genes. Binds specifically to the boxA antiterminator sequence of the ribosomal RNA (rrn) operons. The polypeptide is Transcription antitermination protein NusB (Trichormus variabilis (strain ATCC 29413 / PCC 7937) (Anabaena variabilis)).